The sequence spans 765 residues: MPRSPGTRLKPAKYIPVATAAALLVGSSTLFFVFTCPWLTRAVSPAVPVYNGIIFLFVLANFSMATFMDPGVFPRADEDEDKEDDFRAPLYKNVDVRGIQVRMKWCATCHFYRPPRCSHCSVCDNCVEDFDHHCPWVNNCIGRRNYRYFFLFLLSLSAHMVGVVAFGLVYVLNHAEGLGAAHTTITMAVMCVAGLFFIPVIGLTGFHVVLVTRGRTTNEQVTGKFRGGVNPFTRGCCGNVEHVLCSPLAPRYVVEPPRLPLAVSLKPPFLRPELLDRAAPLKVKLSDNGLKAGLGRSKSKGSLDRLDEKPLDLGPPLPPKIEAGTFSSDLQTPRPGSAESALSVQRTSPPTPAMYKFRPAFPTGPKVPFCGPGEQVPGPDSLTLGDDSIRSLDFVSEPSLDLPDYGPGGLHAAYPPSPPLSASDAFSGALRSLSLKASSRRGGDHVALQPLRSEGGPPTPHRSIFAPHALPNRNGSLSYDSLLNPGSPGGHACPAHPAVGVAGYHSPYLHPGATGDPPRPLPRSFSPVLGPRPREPSPVRYDNLSRTIMASIQERKDREERERLLRSQADSLFGDSGVYDAPSSYSLQQASVLSEGPRGPALRYGSRDDLVAGPGFGGARNPALQTSLSSLSSSVSRAPRTSSSSLQADQASSNAPGPRPSSGSHRSPARQGLPSPPGTPHSPSYAGPKAVAFIHTDLPEPPPSLTVQRDHPQLKTPPSKLNGQSPGLARLGPATGPPGPSASPTRHTLVKKVSGVGGTTYEISV.

Topologically, residues 1-13 (MPRSPGTRLKPAK) are cytoplasmic. A helical membrane pass occupies residues 14 to 34 (YIPVATAAALLVGSSTLFFVF). The Lumenal segment spans residues 35-52 (TCPWLTRAVSPAVPVYNG). Residues 53 to 73 (IIFLFVLANFSMATFMDPGVF) traverse the membrane as a helical segment. Topologically, residues 74-148 (PRADEDEDKE…NCIGRRNYRY (75 aa)) are cytoplasmic. A DHHC domain is found at 104-154 (KWCATCHFYRPPRCSHCSVCDNCVEDFDHHCPWVNNCIGRRNYRYFFLFLL). Cys-134 functions as the S-palmitoyl cysteine intermediate in the catalytic mechanism. A helical transmembrane segment spans residues 149–169 (FFLFLLSLSAHMVGVVAFGLV). The Lumenal portion of the chain corresponds to 170-190 (YVLNHAEGLGAAHTTITMAVM). A helical membrane pass occupies residues 191 to 211 (CVAGLFFIPVIGLTGFHVVLV). Over 212-765 (TRGRTTNEQV…VGGTTYEISV (554 aa)) the chain is Cytoplasmic. Residues 293 to 352 (GLGRSKSKGSLDRLDEKPLDLGPPLPPKIEAGTFSSDLQTPRPGSAESALSVQRTSPPTP) are disordered. Basic and acidic residues predominate over residues 301-311 (GSLDRLDEKPL). Ser-337 bears the Phosphoserine mark. Residue Arg-441 is modified to Omega-N-methylarginine. The interval 509–540 (LHPGATGDPPRPLPRSFSPVLGPRPREPSPVR) is disordered. Phosphoserine is present on residues Ser-606, Ser-627, Ser-675, Ser-682, Ser-725, and Ser-743. The disordered stretch occupies residues 613-747 (GPGFGGARNP…PGPSASPTRH (135 aa)). The span at 622-653 (PALQTSLSSLSSSVSRAPRTSSSSLQADQASS) shows a compositional bias: low complexity.

It belongs to the DHHC palmitoyltransferase family. ERF2/ZDHHC9 subfamily. As to expression, widely expressed.

The protein localises to the golgi apparatus membrane. The protein resides in the mitochondrion membrane. The catalysed reaction is L-cysteinyl-[protein] + hexadecanoyl-CoA = S-hexadecanoyl-L-cysteinyl-[protein] + CoA. Palmitoyltransferase that catalyzes the addition of palmitate onto various protein substrates and therefore functions in several unrelated biological processes. Through the palmitoylation of ABCA1 regulates the localization of the transporter to the plasma membrane and thereby regulates its function in cholesterol and phospholipid efflux. Could also pamitoylate the D(2) dopamine receptor DRD2 and regulate its stability and localization to the plasma membrane. Could also play a role in glutamatergic transmission. Its function is as follows. (Microbial infection) Able to palmitoylate SARS coronavirus-2/SARS-CoV-2 spike protein following its synthesis in the endoplasmic reticulum (ER). In the infected cell, promotes spike biogenesis by protecting it from premature ER degradation, increases half-life and controls the lipid organization of its immediate membrane environment. Once the virus has formed, spike palmitoylation controls fusion with the target cell. In Homo sapiens (Human), this protein is Palmitoyltransferase ZDHHC8.